The following is a 468-amino-acid chain: 3-isopropylmalate dehydratase large subunit (468 aa).

Cys-347, Cys-407, and Cys-410 together coordinate [4Fe-4S] cluster.

This sequence belongs to the aconitase/IPM isomerase family. LeuC type 1 subfamily. In terms of assembly, heterodimer of LeuC and LeuD. [4Fe-4S] cluster is required as a cofactor.

The enzyme catalyses (2R,3S)-3-isopropylmalate = (2S)-2-isopropylmalate. It functions in the pathway amino-acid biosynthesis; L-leucine biosynthesis; L-leucine from 3-methyl-2-oxobutanoate: step 2/4. In terms of biological role, catalyzes the isomerization between 2-isopropylmalate and 3-isopropylmalate, via the formation of 2-isopropylmaleate. The sequence is that of 3-isopropylmalate dehydratase large subunit from Prochlorococcus marinus (strain AS9601).